The following is a 5073-amino-acid chain: Malformin synthetase mlfA (5073 aa).

Positions 194 to 585 are adenylation 1; that stretch reads ERHATNRPHS…CGRADTQVKL (392 aa). Positions 726 to 799 constitute a Carrier 1 domain; sequence SRLEQEVQLA…EAASLAEVQE (74 aa). S760 is modified (O-(pantetheine 4'-phosphoryl)serine). Positions 837–1268 are condensation 1; it reads EDVFPCTTMQ…ALNTLSLLQA (432 aa). The segment at 1296–1685 is adenylation 2; sequence DRWVTRHPEG…GRKDTQVKLR (390 aa). The 78-residue stretch at 1823-1900 folds into the Carrier 2 domain; the sequence is TPASELERTL…QLAAEVGEPA (78 aa). The residue at position 1860 (S1860) is an O-(pantetheine 4'-phosphoryl)serine. Disordered stretches follow at residues 1901-1930 and 1963-1984; these read GQSASSASSTTEEGFTFSTPDDSSTNDGVD and GGSSSNKTPSVSSSSSSSSSSK. Low complexity-rich tracts occupy residues 1903-1927 and 1965-1982; these read SASSASSTTEEGFTFSTPDDSSTND and SSSNKTPSVSSSSSSSSS. A condensation 2 region spans residues 2031–2446; it reads EDIYPATALQ…AVSCSDTETL (416 aa). The interval 2469 to 2861 is adenylation 3; the sequence is SRTPHAPAVC…IGRRDGQLKL (393 aa). The region spanning 2997–3073 is the Carrier 3 domain; it reads RPKTSQEQEM…QLICHLNSIR (77 aa). S3034 is subject to O-(pantetheine 4'-phosphoryl)serine. Condensation stretches follow at residues 3090 to 3555 and 3576 to 3995; these read WVAL…TYDQ and DIYP…EQLV. The adenylation 4 stretch occupies residues 4020-4410; that stretch reads HASRQAVCAW…VGRKDNQIKF (391 aa). The Carrier 4 domain maps to 4544–4620; that stretch reads MPSTAAERKM…DLGDQARSPN (77 aa). S4581 carries the O-(pantetheine 4'-phosphoryl)serine modification. The disordered stretch occupies residues 4611-4633; the sequence is DLGDQARSPNADNQRVSTASSAG. A compositionally biased stretch (polar residues) spans 4617–4631; the sequence is RSPNADNQRVSTASS. Positions 4657–4991 are condensation 5; the sequence is DVLPTTSFQR…LQTIVQHQNN (335 aa).

It belongs to the NRP synthetase family.

Its pathway is secondary metabolite biosynthesis. In terms of biological role, nonribosomal peptide synthetase; part of the gene cluster that mediates the biosynthesis of malformins, cyclic pentapeptides with a disulfide bond between 2 consecutive cysteins, that show potential anti-tumor as well as antimalarial and antitrypanosomal properties. The nonribosomal peptide synthetase mlfA is responsible of the formation of the cyclic pentapeptide. The malformin biosynthesis clusters in malformin-producing fungi also contain enzymes involved in the formation of the disulfide bond between the two consecutive cysteins within malformins, in addition to additional tailoring enzymes such as methyltransferases or oxidoreductases. They are also composed of up to 4 major facilitator superfamily transporters, and transcription factors probably involved in the regulation of the expression of those clusters. This Aspergillus tubingensis (strain CBS 134.48) protein is Malformin synthetase mlfA.